Consider the following 355-residue polypeptide: MGGKTFMLMAGGTGGHIFPALAVADSLRARGHHVIWLGSKDSMEERIVPQYGIRLETLAIKGVRGNGIKRKLMLPFTLYQTVREAQRIIRKHRVECVIGFGGFVTFPGGLAAKLLGVPIVIHEQNAVAGLSNRHLSRWAKRVLYAFPKAFSHEGGLVGNPVRADISNLPVPAERFQGREGRLKILVVGGSLGADVLNKTVPQALALLPDNARPQMYHQSGRGKLGSLQADYDALGVQAECVEFITDMVSAYRDADLVICRAGALTIAELTAAGLGALLVPYPHAVDDHQTANARFMVQAEAGLLLPQTQLTAEKLAEILGSLNREKCLKWAENARTLALPHSADDVAEAAIACAA.

UDP-N-acetyl-alpha-D-glucosamine is bound by residues 13–15 (TGG), asparagine 125, arginine 162, serine 190, isoleucine 244, and glutamine 289.

It belongs to the glycosyltransferase 28 family. MurG subfamily.

The protein localises to the cell inner membrane. It catalyses the reaction di-trans,octa-cis-undecaprenyl diphospho-N-acetyl-alpha-D-muramoyl-L-alanyl-D-glutamyl-meso-2,6-diaminopimeloyl-D-alanyl-D-alanine + UDP-N-acetyl-alpha-D-glucosamine = di-trans,octa-cis-undecaprenyl diphospho-[N-acetyl-alpha-D-glucosaminyl-(1-&gt;4)]-N-acetyl-alpha-D-muramoyl-L-alanyl-D-glutamyl-meso-2,6-diaminopimeloyl-D-alanyl-D-alanine + UDP + H(+). Its pathway is cell wall biogenesis; peptidoglycan biosynthesis. Its function is as follows. Cell wall formation. Catalyzes the transfer of a GlcNAc subunit on undecaprenyl-pyrophosphoryl-MurNAc-pentapeptide (lipid intermediate I) to form undecaprenyl-pyrophosphoryl-MurNAc-(pentapeptide)GlcNAc (lipid intermediate II). This Neisseria meningitidis serogroup C (strain 053442) protein is UDP-N-acetylglucosamine--N-acetylmuramyl-(pentapeptide) pyrophosphoryl-undecaprenol N-acetylglucosamine transferase.